Reading from the N-terminus, the 202-residue chain is Transmembrane 4 L6 family member 4 (202 aa).

Topologically, residues 1 to 9 (MCTGGCARC) are cytoplasmic. The helical transmembrane segment at 10 to 30 (LGGTLIPLAFFGFLANILLFF) threads the bilayer. The Extracellular segment spans residues 31-45 (PGGKVIDDNDHLSQE). The chain crosses the membrane as a helical span at residues 46 to 66 (IWFFGGILGSGVLMIFPALVF). Residues 67–93 (LGLKNNDCCGCCGNEGCGKRFAMFTST) lie on the Cytoplasmic side of the membrane. The chain crosses the membrane as a helical span at residues 94 to 114 (IFAVVGFLGAGYSFIISAISI). Topologically, residues 115–158 (NKGPKCLMANSTWGYPFHDGDYLNDEALWNKCREPLNVVPWNLT) are extracellular. N-linked (GlcNAc...) asparagine glycosylation is found at N124 and N156. A helical membrane pass occupies residues 159–179 (LFSILLVVGGIQMVLCAIQVV). Residues 180 to 202 (NGLLGTLCGDCQCCGCCGGDGPV) are Cytoplasmic-facing.

It belongs to the L6 tetraspanin family. In terms of processing, N-glycosylated. Glycosylation is required for the growth inhibitory effect. As to expression, jejunum and liver.

It localises to the membrane. Regulates the adhesive and proliferative status of intestinal epithelial cells. Can mediate density-dependent cell proliferation. The chain is Transmembrane 4 L6 family member 4 (TM4SF4) from Homo sapiens (Human).